We begin with the raw amino-acid sequence, 698 residues long: Ion-translocating oxidoreductase complex subunit C (698 aa).

2 consecutive 4Fe-4S ferredoxin-type domains span residues 366–397 (TEMGLSEPEQSCIRCGLCVDACPAGLLPQQLY) and 407–436 (KARNHNLFDCIECGACAYVCPSNIPLVQYY). 8 residues coordinate [4Fe-4S] cluster: Cys-377, Cys-380, Cys-383, Cys-387, Cys-416, Cys-419, Cys-422, and Cys-426.

Belongs to the 4Fe4S bacterial-type ferredoxin family. RnfC subfamily. In terms of assembly, the complex is composed of six subunits: RnfA, RnfB, RnfC, RnfD, RnfE and RnfG. Requires [4Fe-4S] cluster as cofactor.

Its subcellular location is the cell inner membrane. Part of a membrane-bound complex that couples electron transfer with translocation of ions across the membrane. The polypeptide is Ion-translocating oxidoreductase complex subunit C (Yersinia pseudotuberculosis serotype O:1b (strain IP 31758)).